The following is a 470-amino-acid chain: Poly(A) polymerase catalytic subunit (470 aa).

Active-site residues include D192 and D194.

It belongs to the poxviridae poly(A) polymerase catalytic subunit family. In terms of assembly, heterodimer of a large (catalytic) subunit and a small (regulatory) subunit.

The enzyme catalyses RNA(n) + ATP = RNA(n)-3'-adenine ribonucleotide + diphosphate. Its function is as follows. Polymerase that creates the 3'-poly(A) tail of mRNA's. The polypeptide is Poly(A) polymerase catalytic subunit (PAPL) (Myxoma virus (strain Lausanne) (MYXV)).